The chain runs to 153 residues: Small ribosomal subunit protein bS16 (153 aa).

Residues Glu130–Ala153 are disordered. A compositionally biased stretch (acidic residues) spans Ala140–Ala153.

Belongs to the bacterial ribosomal protein bS16 family.

The sequence is that of Small ribosomal subunit protein bS16 from Bifidobacterium longum subsp. infantis (strain ATCC 15697 / DSM 20088 / JCM 1222 / NCTC 11817 / S12).